The chain runs to 127 residues: MTPKKGKKRVKKNIATGIVHIASTFNNTMITICDASGNVISWSSAGARGFKGSRKSTPFAAQVAAGDAAAKAMEHGLKTVSVVVKGPGAGRESALRALSAAGLKITLIRDVTPIPHNGCRPPKRRRV.

Belongs to the universal ribosomal protein uS11 family. As to quaternary structure, part of the 30S ribosomal subunit. Interacts with proteins S7 and S18. Binds to IF-3.

Located on the platform of the 30S subunit, it bridges several disparate RNA helices of the 16S rRNA. Forms part of the Shine-Dalgarno cleft in the 70S ribosome. This Anaeromyxobacter sp. (strain Fw109-5) protein is Small ribosomal subunit protein uS11.